The following is a 147-amino-acid chain: Diaminohydroxyphosphoribosylamino-pyrimidine deaminase (147 aa).

Positions 1–123 constitute a CMP/dCMP-type deaminase domain; it reads MNDIFYMKRA…YLKKHGICVK (123 aa). Residue H50 coordinates Zn(2+). The Proton donor role is filled by E52. The Zn(2+) site is built by C75 and C84.

This sequence belongs to the cytidine and deoxycytidylate deaminase family. Zn(2+) serves as cofactor.

It carries out the reaction 2,5-diamino-6-hydroxy-4-(5-phosphoribosylamino)-pyrimidine + H2O + H(+) = 5-amino-6-(5-phospho-D-ribosylamino)uracil + NH4(+). It functions in the pathway cofactor biosynthesis; riboflavin biosynthesis; 5-amino-6-(D-ribitylamino)uracil from GTP: step 2/4. The protein is Diaminohydroxyphosphoribosylamino-pyrimidine deaminase (ribD1) of Buchnera aphidicola subsp. Acyrthosiphon pisum (strain APS) (Acyrthosiphon pisum symbiotic bacterium).